The primary structure comprises 477 residues: D(1B) dopamine receptor (477 aa).

Topologically, residues 1–39 are extracellular; it reads MLPPGSNGTAYPGQFALYQQLAQGNAVGGSAGAPPLGPS. Asn-7 carries an N-linked (GlcNAc...) asparagine glycan. The chain crosses the membrane as a helical span at residues 40–66; it reads QVVTACLLTLLIIWTLLGNVLVCAAIV. Over 67 to 77 the chain is Cytoplasmic; sequence RSRHLRANMTN. A helical membrane pass occupies residues 78-104; sequence VFIVSLAVSDLFVALLVMPWKAVAEVA. Residues 105-114 are Extracellular-facing; sequence GYWPFGAFCD. Cys-113 and Cys-217 are disulfide-bonded. A helical transmembrane segment spans residues 115-136; the sequence is VWVAFDIMCSTASILNLCVISV. The Cytoplasmic portion of the chain corresponds to 137–158; it reads DRYWAISRPFRYKRKMTQRMAL. Residues 159-180 traverse the membrane as a helical segment; that stretch reads VMVGLAWTLSILISFIPVQLNW. Residues 181–223 lie on the Extracellular side of the membrane; that stretch reads HRDQAASWGGLDLPNNLANWTPWEEDFWEPDVNAENCDSSLNR. The N-linked (GlcNAc...) asparagine glycan is linked to Asn-222. A helical transmembrane segment spans residues 224–246; the sequence is TYAISSSLISFYIPVAIMIVTYT. The Cytoplasmic segment spans residues 247–296; that stretch reads RIYRIAQVQIRRISSLERAAEHAQSCRSSAACAPDTSLRASIKKETKVLK. The chain crosses the membrane as a helical span at residues 297–320; the sequence is TLSVIMGVFVCCWLPFFILNCMVP. The Extracellular segment spans residues 321–340; that stretch reads FCSGHPEGPPAGFPCVSETT. Residues 341–360 traverse the membrane as a helical segment; that stretch reads FDVFVWFGWANSSLNPVIYA. Topologically, residues 361 to 477 are cytoplasmic; it reads FNADFQKVFA…ITPFTPNGFH (117 aa). Cys-375 carries S-palmitoyl cysteine lipidation.

The protein belongs to the G-protein coupled receptor 1 family. In terms of tissue distribution, neuron-specific, localized primarily within limbic regions of the brain.

It localises to the cell membrane. In terms of biological role, dopamine receptor whose activity is mediated by G proteins which activate adenylyl cyclase. This chain is D(1B) dopamine receptor (DRD5), found in Homo sapiens (Human).